Consider the following 801-residue polypeptide: Cadherin-20 (801 aa).

A signal peptide spans 1–34 (MWTSGRMSNAKNWLGLGMSLYFWGLMDLTTTVLS). Residues 35–59 (DTPTPQGELEALLSDKPQSHQRTKR) constitute a propeptide that is removed on maturation. Residues 60–619 (SWVWNQFFVL…AYMLPVSLSR (560 aa)) lie on the Extracellular side of the membrane. Cadherin domains lie at 61–165 (WVWN…EPKF), 166–274 (LDGP…PPRF), 275–389 (PQKH…PPVF), 390–494 (EPGF…APEF), and 494–610 (FPRF…SPEA). Residue Asn261 is glycosylated (N-linked (GlcNAc...) asparagine). N-linked (GlcNAc...) asparagine glycosylation is found at Asn420, Asn461, and Asn542. Residues 620–640 (GALIAILACIFVLLVLVLLIL) traverse the membrane as a helical segment. Residues 641-801 (SMRRHRKQPY…GASEGPAPLW (161 aa)) are Cytoplasmic-facing.

As to expression, expressed in placenta, adult brain, and fetal brain.

Its subcellular location is the cell membrane. Its function is as follows. Cadherins are calcium-dependent cell adhesion proteins. They preferentially interact with themselves in a homophilic manner in connecting cells; cadherins may thus contribute to the sorting of heterogeneous cell types. This chain is Cadherin-20 (CDH20), found in Homo sapiens (Human).